We begin with the raw amino-acid sequence, 433 residues long: MADTSPRESKLNKQDQDLHLEIDETGLACKSEVKKRWLGARGTAGLYGNGKYYYEVTITSKGLCRVGWATLGGSLNIGKGLDSFGYGGTGMKSTHKKFDDYGLPFTLNDVIGCYLDLDSRTIWWSKNGEQFPAAFSIDVKYKNSNTCLFPAVLCQNSSLSVNFGSQPFKFPPGNQFTAVSDAPNENVNWWSYEEQNSFEHVVVKLPFAVEEDVHNEFRMHTKLMLTELKRTQCKQDKDGSIRRTLQPISKTICAFLNTDGGRLFLGVNDDKVIKGISMSKNMIYHFFGSLRHMCENFKPCSPLCRIKVSILEVIPVGVIKVKLRKADLLKEEAHDFPKLACHSVGGSFCDCFLEINKAPTKQYLLIIQVSPPNPNSRTTIFQNEEGLVYRRRMASNKCVYLDDLRRMMNEKNQVFVDLPDEARAEIDSFSKFD.

A B30.2/SPRY domain is found at 1–168 (MADTSPRESK…LSVNFGSQPF (168 aa)). The tract at residues 199–400 (EHVVVKLPFA…RRMASNKCVY (202 aa)) is SLFN-like fold. Catalysis depends on residues glutamate 211 and glutamate 216.

The protein belongs to the Schlafen family. Component of the trimeric PUCH (precursor of 21U RNA 5'-end cleavage holoenzyme) complex; consisting of tofu-1, tofu-2 and either slfl-3 or slfl-4. Within the complex, interacts (via N-terminus) with tofu-1 (via N-terminus); the interaction stabilizes tofu-2 and may form a functional nuclease. Within the complex, interacts (via N-terminus) with slfl-3 (via N-terminus); the presence of tofu-1 is required for this interaction. Requires Mg(2+) as cofactor. As to expression, expressed in the germline.

It is found in the cytoplasm. The protein resides in the mitochondrion. Its activity is regulated as follows. Inhibited by ethylenediaminetetraacetic acid (EDTA). Component of the trimeric PUCH (precursor of 21U RNA 5'-end cleavage holoenzyme) complex, that acts as an endoribonuclease processing the 5'-end of precursor Piwi-interacting RNAs (piRNAs). The PUCH complex consists of tofu-1, tofu-2 and either slfl-3 or slfl-4, with tofu-2 exhibiting endoribonuclease activity. PUCH-mediated processing strictly requires a 7-methyl-G cap (m7 G-cap) and an uracil at position three (U3). PUCH also exhibits a strict bias for piRNA precursors with an A or G at position 1. Mature piRNA production is enhanced by the interaction of PUCH with the PETISCO complex, which is stabilizing piRNA precursors and allows their processing by PUCH. The protein is Schlafen-like protein 2 of Caenorhabditis elegans.